A 188-amino-acid chain; its full sequence is uncharacterized protein (188 aa).

Residues 1-15 show a composition bias toward basic and acidic residues; it reads MVSSKDKIKEELKQE. A disordered region spans residues 1-21; sequence MVSSKDKIKEELKQEEPEENV.

This is an uncharacterized protein from Saccharolobus islandicus (Sulfolobus islandicus).